The sequence spans 664 residues: Glycine--tRNA ligase beta subunit (664 aa).

Belongs to the class-II aminoacyl-tRNA synthetase family. Tetramer of two alpha and two beta subunits.

Its subcellular location is the cytoplasm. It carries out the reaction tRNA(Gly) + glycine + ATP = glycyl-tRNA(Gly) + AMP + diphosphate. The chain is Glycine--tRNA ligase beta subunit from Rickettsia conorii (strain ATCC VR-613 / Malish 7).